Reading from the N-terminus, the 91-residue chain is uncharacterized protein (91 aa).

The next 3 helical transmembrane spans lie at 4–21 (YAII…LRRG), 28–50 (IIEV…SHAV), and 60–82 (VKAF…GTYL).

The protein localises to the cell membrane. This is an uncharacterized protein from Archaeoglobus fulgidus (strain ATCC 49558 / DSM 4304 / JCM 9628 / NBRC 100126 / VC-16).